The sequence spans 2136 residues: Protein CELLULOSE SYNTHASE INTERACTIVE 3 (2136 aa).

ARM repeat units follow at residues 27 to 66 (MEMD…LLGI), 71 to 111 (REAR…VLCK), 113 to 152 (KDLR…EVSS), 159 to 201 (HIGM…NLCG), 204 to 243 (DGYW…RLVL), 246 to 286 (CDSI…ALSA), 289 to 337 (DEAK…NVFG), 376 to 417 (PESS…SLYG), 419 to 458 (SSLS…GLCH), 461 to 500 (VGIW…ILTA), 503 to 542 (DDSK…NLCC), 545 to 584 (EEIR…KLVH), 586 to 618 (ADPA…HVLS), 619 to 663 (KASQ…DLFS), 666 to 705 (QDIC…ALSR), 711 to 750 (NNKK…NLLS), 752 to 791 (PDIA…QLLK), 811 to 848 (SLVD…FSYP), 849 to 887 (PWIA…RLCS), 936 to 980 (QLIT…GFLE), 1013 to 1041 (SVDA…YTSS), 1042 to 1083 (AQAE…TLAV), 1109 to 1149 (RGIN…SLVK), 1163 to 1204 (EDVR…RIAD), 1207 to 1247 (DTNK…VLFS), 1249 to 1288 (HELR…ELFD), 1290 to 1329 (ENIR…KLSS), 1333 to 1375 (SNTA…VVFS), 1377 to 1416 (KNIR…ILLD), 1418 to 1457 (EQHL…KLGK), 1460 to 1499 (VPRK…ILTN), 1518 to 1546 (AVLL…KQQT), 1547 to 1585 (LEAF…HFLT), 1587 to 1626 (EDFQ…KISA), 1628 to 1669 (WPKA…NILQ), 1670 to 1704 (YDAE…ALML), 1710 to 1750 (ASST…NNPR), 1790 to 1833 (SQHE…NFVM), 1836 to 1875 (RTNR…FLFS), 1921 to 1960 (PKLR…LLRH), 1969 to 2008 (VAKS…CLPG), and 2010 to 2035 (LTVN…QLTI). Residues 1989–2106 (KTCPPRFHDK…VTEGEYSGSL (118 aa)) enclose the C2 domain.

In terms of assembly, associates with cellulase synthase (CESA) complexes. Binds to cortical microtubules. Interacts with CESA3 and CESA6. Expressed in dark-grown hypocotyls, leaves (confined to vasculature and trichomes), stamen, pollen, developing siliques, and roots. Restricted in meristematic tissue of the shoot and root. Present in distinct punctae at the cell cortex, called microtubule-associated cellulose synthase compartments, that move with constant velocities of 10 to 3000 nm/min.

The protein localises to the cell membrane. Its subcellular location is the cytoplasm. It localises to the cytoskeleton. The protein resides in the endomembrane system. In terms of biological role, regulator of the microtubular cytoskeleton. Microtubule-associated protein involved in the association of cellulase synthase (CESA) complexes (CSCs) and cortical microtubules. Promotes dynamics of CSCs in the plasma membrane in both microtubules-dependent and microtubules-independent manners. Regulates primary cell wall biosynthesis and cellulose microfibrils organization. The polypeptide is Protein CELLULOSE SYNTHASE INTERACTIVE 3 (Arabidopsis thaliana (Mouse-ear cress)).